We begin with the raw amino-acid sequence, 133 residues long: Large ribosomal subunit protein bL21 (133 aa).

The segment at 1 to 22 is disordered; it reads MAEKPAAKPKAAAAKAEAKDQS.

It belongs to the bacterial ribosomal protein bL21 family. Part of the 50S ribosomal subunit. Contacts protein L20.

Functionally, this protein binds to 23S rRNA in the presence of protein L20. This Prochlorococcus marinus (strain MIT 9303) protein is Large ribosomal subunit protein bL21.